Consider the following 25-residue polypeptide: MSGRGKGGKGLGKGGAKRHRKVLRD.

Residues 1–14 show a composition bias toward gly residues; that stretch reads MSGRGKGGKGLGKG. The disordered stretch occupies residues 1–25; the sequence is MSGRGKGGKGLGKGGAKRHRKVLRD. Ser-2 carries the post-translational modification N-acetylserine. An N6-acetyllysine mark is found at Lys-6, Lys-9, Lys-13, Lys-17, and Lys-21. Over residues 15 to 25 the composition is skewed to basic residues; that stretch reads GAKRHRKVLRD. A DNA-binding region spans residues 17–21; it reads KRHRK.

It belongs to the histone H4 family. The nucleosome is a histone octamer containing two molecules each of H2A, H2B, H3 and H4 assembled in one H3-H4 heterotetramer and two H2A-H2B heterodimers. The octamer wraps approximately 147 bp of DNA.

The protein localises to the nucleus. Its subcellular location is the chromosome. Its function is as follows. Core component of nucleosome. Nucleosomes wrap and compact DNA into chromatin, limiting DNA accessibility to the cellular machineries which require DNA as a template. Histones thereby play a central role in transcription regulation, DNA repair, DNA replication and chromosomal stability. DNA accessibility is regulated via a complex set of post-translational modifications of histones, also called histone code, and nucleosome remodeling. The protein is Histone H4 of Medicago sativa (Alfalfa).